We begin with the raw amino-acid sequence, 132 residues long: Translation initiation factor 5A (132 aa).

Lysine 37 is subject to Hypusine.

This sequence belongs to the eIF-5A family.

Its subcellular location is the cytoplasm. Its function is as follows. Functions by promoting the formation of the first peptide bond. In Methanocaldococcus jannaschii (strain ATCC 43067 / DSM 2661 / JAL-1 / JCM 10045 / NBRC 100440) (Methanococcus jannaschii), this protein is Translation initiation factor 5A (eif5a).